A 701-amino-acid polypeptide reads, in one-letter code: MRKALMWLPLLLIGLSPATWAVTPEAWKHTAYAYDARQTELATALADFAKEFGMALDMPPIPGVLDDRIRAQSPEEFLDRLGQEYHFQWFVYNDTLYVSPSSEHTSARIEVSSDAVDDLQTALTDVGLLDKRFGWGVLPNEGVVLVRGPAKYVELVRDYSKKVEAPEKGDKQDVIVFPLKYASAADRTIRYRDQQLVVAGVASILQDLLDTRSHGGSINGMDLLGRGGRGNGLAGGGSPDTPSLPMSSSGLDTNALEQGLDQVLHYGGGGTKSSGKSRSGGRANIRVTADVRNNAVLIYDLPSRKAMYEKLIKELDVSRNLIEIDAVILDIDRNELAELSSRWNFNAGSVNGGANMFDAGTSSTLFIQNAGKFAAELHALEGNGSASVIGNPSILTLENQPAVIDFSRTEYLTATSERVANIEPITAGTSLQVTPRSLDHDGKPQVQLIVDIEDGQIDISDINDTQPSVRKGNVSTQAVIAEHGSLVIGGFHGLEANDKVHKVPLLGDIPYIGKLLFQSRSRELSQRERLFILTPRLIGDQVNPARYVQNGNPHDVDDQMKRIKERRDGGELPTRGDIQKVFTQMVDGAAPEGMHDGETLPFETDSLCDPGQGLSLDGQRSQWYARKDWGVAVVVARNNTDKPVRIDESRCGGRWVIGVAAWPHAWLQPGEESEVYIAVRQPQISKMAKESRPSLLRGAKP.

The signal sequence occupies residues 1–21 (MRKALMWLPLLLIGLSPATWA). Gly residues predominate over residues 229 to 238 (RGNGLAGGGS). The disordered stretch occupies residues 229–252 (RGNGLAGGGSPDTPSLPMSSSGLD). Residues 240 to 252 (DTPSLPMSSSGLD) show a composition bias toward polar residues.

Belongs to the bacterial secretin family. T3SS SctC subfamily. As to quaternary structure, the core secretion machinery of the T3SS is composed of approximately 20 different proteins, including cytoplasmic components, a base, an export apparatus and a needle. This subunit is part of the base, which anchors the injectisome in the bacterial cell envelope. Forms a stable homooligomeric complex.

The protein resides in the cell outer membrane. Functionally, component of the type III secretion system (T3SS), also called injectisome, which is used to inject bacterial effector proteins into eukaryotic host cells. Forms a ring-shaped multimeric structure with an apparent central pore in the outer membrane. Involved in the secretion of a proteinaceous elicitor of the hypersensitivity response in plants. This chain is Type 3 secretion system secretin, found in Pseudomonas syringae pv. syringae.